The following is a 223-amino-acid chain: Mediator of RNA polymerase II transcription subunit 8 (223 aa).

An interaction with TBP1 region spans residues S2 to A138. The stretch at L33 to L59 forms a coiled coil.

This sequence belongs to the Mediator complex subunit 8 family. Component of the Mediator complex, which is composed of at least 21 subunits that form three structurally distinct submodules. The Mediator head module contains MED6, MED8, MED11, SRB4/MED17, SRB5/MED18, ROX3/MED19, SRB2/MED20 and SRB6/MED22, the middle module contains MED1, MED4, NUT1/MED5, MED7, CSE2/MED9, NUT2/MED10, SRB7/MED21 and SOH1/MED31, and the tail module contains MED2, PGD1/MED3, RGR1/MED14, GAL11/MED15 and SIN4/MED16. The head and the middle modules interact directly with RNA polymerase II, whereas the elongated tail module interacts with gene-specific regulatory proteins. MED8 interacts directly with SRB5/MED18. Also interacts with Hexokinase B (HXK2). Interacts with TBP1.

The protein localises to the nucleus. Its function is as follows. Component of the Mediator complex, a coactivator involved in the regulated transcription of nearly all RNA polymerase II-dependent genes. Mediator functions as a bridge to convey information from gene-specific regulatory proteins to the basal RNA polymerase II transcription machinery. The Mediator complex, having a compact conformation in its free form, is recruited to promoters by direct interactions with regulatory proteins and serves for the assembly of a functional preinitiation complex with RNA polymerase II and the general transcription factors. The Mediator complex unfolds to an extended conformation and partially surrounds RNA polymerase II, specifically interacting with the unphosphorylated form of the C-terminal domain (CTD) of RNA polymerase II. The Mediator complex dissociates from the RNA polymerase II holoenzyme and stays at the promoter when transcriptional elongation begins. MED8 binds to the consensus sequence 5'-[AC][AG]GAAAT-3' in both the UAS of SUC2 and the DRS2 of HXK2. The protein is Mediator of RNA polymerase II transcription subunit 8 (MED8) of Saccharomyces cerevisiae (strain ATCC 204508 / S288c) (Baker's yeast).